A 229-amino-acid chain; its full sequence is UPF0758 protein Fjoh_0413 (229 aa).

In terms of domain architecture, MPN spans 107-229; the sequence is KITSSKDAFT…YYSFVDEGIF (123 aa). 3 residues coordinate Zn(2+): histidine 178, histidine 180, and aspartate 191. The JAMM motif signature appears at 178 to 191; the sequence is HNHPSGELNPSQAD.

Belongs to the UPF0758 family.

This is UPF0758 protein Fjoh_0413 from Flavobacterium johnsoniae (strain ATCC 17061 / DSM 2064 / JCM 8514 / BCRC 14874 / CCUG 350202 / NBRC 14942 / NCIMB 11054 / UW101) (Cytophaga johnsonae).